A 248-amino-acid polypeptide reads, in one-letter code: Ubiquinone biosynthesis O-methyltransferase (248 aa).

S-adenosyl-L-methionine is bound by residues Arg41, Gly72, Asp93, and Met136.

It belongs to the methyltransferase superfamily. UbiG/COQ3 family.

It carries out the reaction a 3-demethylubiquinol + S-adenosyl-L-methionine = a ubiquinol + S-adenosyl-L-homocysteine + H(+). The catalysed reaction is a 3-(all-trans-polyprenyl)benzene-1,2-diol + S-adenosyl-L-methionine = a 2-methoxy-6-(all-trans-polyprenyl)phenol + S-adenosyl-L-homocysteine + H(+). The protein operates within cofactor biosynthesis; ubiquinone biosynthesis. O-methyltransferase that catalyzes the 2 O-methylation steps in the ubiquinone biosynthetic pathway. The chain is Ubiquinone biosynthesis O-methyltransferase from Bartonella bacilliformis (strain ATCC 35685 / KC583 / Herrer 020/F12,63).